We begin with the raw amino-acid sequence, 265 residues long: Cytochrome c oxidase subunit 3 (265 aa).

Helical transmembrane passes span 16–36 (PWPISGSLGALATTVGGVMYM), 41–61 (GGATLLSLGLIFLLYTMFVWW), 84–104 (YGSILFIVSEVMFLFAFFWAS), 162–182 (AVYALVATVSLALVSTGFQGM), 200–220 (FFLATGFHGFHVIIGTLFLIV), and 245–265 (WHFVDVVRLFPFVSIYWWGGI).

This sequence belongs to the cytochrome c oxidase subunit 3 family. Component of the cytochrome c oxidase (complex IV, CIV), a multisubunit enzyme composed of a catalytic core of 3 subunits and several supernumerary subunits. The complex exists as a monomer or a dimer and forms supercomplexes (SCs) in the inner mitochondrial membrane with ubiquinol-cytochrome c oxidoreductase (cytochrome b-c1 complex, complex III, CIII).

The protein localises to the mitochondrion inner membrane. It carries out the reaction 4 Fe(II)-[cytochrome c] + O2 + 8 H(+)(in) = 4 Fe(III)-[cytochrome c] + 2 H2O + 4 H(+)(out). Its function is as follows. Component of the cytochrome c oxidase, the last enzyme in the mitochondrial electron transport chain which drives oxidative phosphorylation. The respiratory chain contains 3 multisubunit complexes succinate dehydrogenase (complex II, CII), ubiquinol-cytochrome c oxidoreductase (cytochrome b-c1 complex, complex III, CIII) and cytochrome c oxidase (complex IV, CIV), that cooperate to transfer electrons derived from NADH and succinate to molecular oxygen, creating an electrochemical gradient over the inner membrane that drives transmembrane transport and the ATP synthase. Cytochrome c oxidase is the component of the respiratory chain that catalyzes the reduction of oxygen to water. Electrons originating from reduced cytochrome c in the intermembrane space (IMS) are transferred via the dinuclear copper A center (CU(A)) of subunit 2 and heme A of subunit 1 to the active site in subunit 1, a binuclear center (BNC) formed by heme A3 and copper B (CU(B)). The BNC reduces molecular oxygen to 2 water molecules using 4 electrons from cytochrome c in the IMS and 4 protons from the mitochondrial matrix. In Aegilops columnaris (Goatgrass), this protein is Cytochrome c oxidase subunit 3 (COX3).